We begin with the raw amino-acid sequence, 3994 residues long: Hybrid PKS-NRPs synthetase opdA (3994 aa).

Residues 6–442 (PEPIAIVGSS…GTNSHVILES (437 aa)) enclose the Ketosynthase family 3 (KS3) domain. Active-site for beta-ketoacyl synthase activity residues include C179, H316, and H362. The malonyl-CoA:ACP transacylase (MAT) domain stretch occupies residues 559 to 881 (VFTGQGAQWP…LKRDSNDVEA (323 aa)). Positions 951–1085 (HELLGRRTHD…GRLIIHLGET (135 aa)) are N-terminal hotdog fold. The interval 951 to 1251 (HELLGRRTHD…SVKPMAPPTA (301 aa)) is dehydratase (DH) domain. The PKS/mFAS DH domain maps to 951-1252 (HELLGRRTHD…VKPMAPPTAE (302 aa)). H983 serves as the catalytic Proton acceptor; for dehydratase activity. The interval 1100–1252 (LLSVDTDEGY…VKPMAPPTAE (153 aa)) is C-terminal hotdog fold. Residue D1159 is the Proton donor; for dehydratase activity of the active site. The segment at 1292–1593 (DRVVLYYVQR…VDLAFHDLPD (302 aa)) is methyltransferase (MT) domain. Residues 2123–2297 (TYLMVGMAGG…ASIIHIGFVT (175 aa)) are ketoreductase (KR) domain. One can recognise a Carrier 1 domain in the interval 2406–2483 (EAVEITQKAF…QICTNAAKQL (78 aa)). At S2443 the chain carries O-(pantetheine 4'-phosphoryl)serine. Positions 2486–2575 (QKGGQEPSEQ…FDPDDRDYNP (90 aa)) are disordered. Polar residues-rich tracts occupy residues 2505-2514 (LHVSQGSLHT) and 2522-2546 (TETS…SVTD). The span at 2547 to 2556 (TVEKRDKGDI) shows a compositional bias: basic and acidic residues. The span at 2557–2570 (SVDEGPNEQFDPDD) shows a compositional bias: acidic residues. Residues 2582–3007 (RLSSGQSRIY…SNTYMTVAKI (426 aa)) are condensation (C) domain. The interval 3043–3436 (HETNREDLAI…DGSLVFLGRL (394 aa)) is adenylation (A) (KR) domain. A Carrier 2 domain is found at 3553 to 3630 (PKLSLRQSEL…KMTMLVDLER (78 aa)). The residue at position 3590 (S3590) is an O-(pantetheine 4'-phosphoryl)serine. Residues 3679–3895 (TGATGFLGGS…FDFKKVEEVA (217 aa)) form a reductase (RED) domain region.

The protein in the C-terminal section; belongs to the NRP synthetase family. The cofactor is pantetheine 4'-phosphate.

Its pathway is secondary metabolite biosynthesis. Functionally, hybrid PKS-NRPS synthetase; part of the gene cluster that mediates the biosynthesis of oxopyrrolidines, polyketide-amino acid hybrid compounds with feature structures of tetramic acid. The polyketide chain is first assembled by the highly reducing PKS module of opdA using acetyl-CoA as the starter unit and five malonyl-CoA as the extender units. OpdC acts as trans-acting enoyl reductase and reduces the terminal alkenyl to alkane. The 17R in oxopyrrolidine A and 15R, 17S in oxopyrrolidine B are generated by non-stereospecific catalysis of the ketoreductase (KR) domain and enoyl reductases. Then the polyketides with specific configurations are transferred to the NRPS module of opdA and linked to L-tyrosine to form an amide bond. Finally, the oxopyrrolidines are offloaded through a Dieckmann cyclization catalyzed by the terminal D domain to give a tetramic acid moiety. The chain is Hybrid PKS-NRPs synthetase opdA from Penicillium oxalicum (strain 114-2 / CGMCC 5302) (Penicillium decumbens).